A 515-amino-acid polypeptide reads, in one-letter code: 1-pyrroline-5-carboxylate dehydrogenase (515 aa).

Residues Glu-286 and Cys-320 contribute to the active site.

Belongs to the aldehyde dehydrogenase family. RocA subfamily.

It catalyses the reaction L-glutamate 5-semialdehyde + NAD(+) + H2O = L-glutamate + NADH + 2 H(+). Its pathway is amino-acid degradation; L-proline degradation into L-glutamate; L-glutamate from L-proline: step 2/2. This Bacillus mycoides (strain KBAB4) (Bacillus weihenstephanensis) protein is 1-pyrroline-5-carboxylate dehydrogenase.